Here is a 426-residue protein sequence, read N- to C-terminus: tRNA modification GTPase MnmE (426 aa).

Residues R20, E77, and M117 each contribute to the (6S)-5-formyl-5,6,7,8-tetrahydrofolate site. A TrmE-type G domain is found at 213–350 (GFEVAILGAP…LLTDIEGVLS (138 aa)). Position 223 (N223) interacts with K(+). Residues 223 to 228 (NAGKST), 242 to 248 (SDVPGTT), and 267 to 270 (DTAG) each bind GTP. S227 is a Mg(2+) binding site. 3 residues coordinate K(+): S242, V244, and T247. Mg(2+) is bound at residue T248. K426 provides a ligand contact to (6S)-5-formyl-5,6,7,8-tetrahydrofolate.

The protein belongs to the TRAFAC class TrmE-Era-EngA-EngB-Septin-like GTPase superfamily. TrmE GTPase family. Homodimer. Heterotetramer of two MnmE and two MnmG subunits. The cofactor is K(+).

The protein resides in the cytoplasm. Exhibits a very high intrinsic GTPase hydrolysis rate. Involved in the addition of a carboxymethylaminomethyl (cmnm) group at the wobble position (U34) of certain tRNAs, forming tRNA-cmnm(5)s(2)U34. The protein is tRNA modification GTPase MnmE of Jannaschia sp. (strain CCS1).